A 736-amino-acid polypeptide reads, in one-letter code: MNVERSELLAGIGQDALWALIEGRHGDPFSILGPHQSGGMTIVRVYLPGAEAVDLIDATSGRVVAPFSIAHPSGLFAATVASRTGYRLRITWPDAVQITEDPYSFGLLLGELDLHLISEGTHYSLSRTLGAVAMSIDGISGVRFAVWAPNARRVSVVGDFNAWDGRRNPMRLRPSAGVWELFIPRLAPGERYKFEIVDAEGTCLPQKADPVARASEAAPSTASIVASSTPFRWTDDGWMKGRSRQDRLEGAFSVYEVHVGSWLRDQKDGNRSLDWVELSQRLVPYVSDMGFTHIELLPIMEHPFGGSWGYQPLGLFAPTGRYGTPEDFAYFVDRCHGAGLGVILDWVPAHFPTDVWGLARFDGSALYEHEDPREGFHRDWNTLIYNLGRNEVKGFLIASALEWLERYHIDGLRVDAVASMLYRDYSRNEGEWIPNQYGGRENLEAVEFFKHLNSIIHERCPHAMTIAEESTAWPGVTKPPEQGGLGFDIKWNMGWMHDSLSYIEKDPIYRSYAHGTMTFGMIYAYSERFILPISHDEVVYGKGSLLTKMPGDEWQKFANLRSYLAFMWGHPGKKLLFMGSEIAQPSEWNHDGSVTWDVLDQPQHVGIQRLVKDLNGLYGDEPALQFGDFHSEGFEWAAADDAVNSVLGMLRYAPDRASSVLVMSNFTPVPRYGYRIGVPSDGVWIERITTDAREYGGSGLVNGAVSSEPVPAHGRPVSLSLTLPPLSTIFLQGPSP.

Asp-415 (nucleophile) is an active-site residue. Catalysis depends on Glu-468, which acts as the Proton donor.

It belongs to the glycosyl hydrolase 13 family. GlgB subfamily. In terms of assembly, monomer.

The catalysed reaction is Transfers a segment of a (1-&gt;4)-alpha-D-glucan chain to a primary hydroxy group in a similar glucan chain.. It participates in glycan biosynthesis; glycogen biosynthesis. In terms of biological role, catalyzes the formation of the alpha-1,6-glucosidic linkages in glycogen by scission of a 1,4-alpha-linked oligosaccharide from growing alpha-1,4-glucan chains and the subsequent attachment of the oligosaccharide to the alpha-1,6 position. The chain is 1,4-alpha-glucan branching enzyme GlgB 2 from Rhizobium johnstonii (strain DSM 114642 / LMG 32736 / 3841) (Rhizobium leguminosarum bv. viciae).